A 116-amino-acid chain; its full sequence is Insulin (116 aa).

Positions Met-1–Ala-24 are cleaved as a signal peptide. Intrachain disulfides connect Cys-32/Cys-102, Cys-44/Cys-115, and Cys-101/Cys-106. A propeptide spans Asp-56–Val-93 (c peptide).

The protein belongs to the insulin family. In terms of assembly, heterodimer of a B chain and an A chain linked by two disulfide bonds.

It is found in the secreted. Its function is as follows. Insulin decreases blood glucose concentration. It increases cell permeability to monosaccharides, amino acids and fatty acids. It accelerates glycolysis, the pentose phosphate cycle, and glycogen synthesis in liver. In Lophius americanus (American angler), this protein is Insulin (ins).